We begin with the raw amino-acid sequence, 442 residues long: Choline monooxygenase, chloroplastic (442 aa).

Residues 1-58 (MASSASMLINYPTTFCGVRNSSNPNNDQFSDQINIPSSLNNNINISKITSKTNKIIPK) constitute a chloroplast transit peptide. In terms of domain architecture, Rieske spans 123-229 (WQVAGYSDQI…VAIWGPFVLI (107 aa)). The [2Fe-2S] cluster site is built by Cys165, His167, Cys184, and His187. Fe cation contacts are provided by His290 and His295.

The protein belongs to the choline monooxygenase family. Requires [2Fe-2S] cluster as cofactor. Fe cation serves as cofactor. The cofactor is Mg(2+).

Its subcellular location is the plastid. It localises to the chloroplast stroma. The catalysed reaction is choline + 2 reduced [2Fe-2S]-[ferredoxin] + O2 + 2 H(+) = betaine aldehyde hydrate + 2 oxidized [2Fe-2S]-[ferredoxin] + H2O. Its pathway is amine and polyamine biosynthesis; betaine biosynthesis via choline pathway; betaine aldehyde from choline (monooxygenase route): step 1/1. Its function is as follows. Catalyzes the first step of the osmoprotectant glycine betaine synthesis. The sequence is that of Choline monooxygenase, chloroplastic (CMO) from Amaranthus tricolor (Joseph's coat).